Reading from the N-terminus, the 333-residue chain is 4-hydroxyproline epimerase (333 aa).

The active-site Proton acceptor is Cys-90. Substrate is bound by residues 91 to 92 (GH) and Asp-249. Residue Cys-253 is the Proton donor of the active site. A substrate-binding site is contributed by 254–255 (GT).

Belongs to the proline racemase family. Homodimer.

It catalyses the reaction trans-4-hydroxy-L-proline = cis-4-hydroxy-D-proline. With respect to regulation, inhibited by iodoacetate, iodoacetamide and by high amounts (10 mM) of pyrrole-2-carboxylic acid (PYC). Not inhibited by PYC at 1 mM. Allows intracellular utilization of 4-hydroxyproline, one of the major constituents of host collagen, by converting 4-hydroxy-L-proline to 4-hydroxy-D-proline, which can be further metabolized by intracellular 4-hydroxy-D-proline oxidases. Strong B-cell mitogen. Plays an important role in the regulation of intra- and extracellular amino acid pools, allowing the bacterium to profit from host precursors and enzymatic pathways. The polypeptide is 4-hydroxyproline epimerase (Brucella melitensis biotype 1 (strain ATCC 23456 / CCUG 17765 / NCTC 10094 / 16M)).